Reading from the N-terminus, the 639-residue chain is Immunoglobulin-like domain-containing receptor 2 (639 aa).

The signal sequence occupies residues 1–20 (MDRVLLRWISLFWLTAMVEG). Residues 21–162 (LQVTVPDKKK…LEGKNEDSVE (142 aa)) enclose the Ig-like V-type domain. Residues 21-186 (LQVTVPDKKK…PSFAVEIMPE (166 aa)) are Lumenal-facing. Cys-42 and Cys-145 are oxidised to a cystine. The helical transmembrane segment at 187–207 (WVFVGLVLLGVFLFFVLVGIC) threads the bilayer. Residues 208-639 (WCQCCPHSCC…DFPTRMSLVV (432 aa)) are Cytoplasmic-facing. 3 disordered regions span residues 273–295 (LMDKPHPPPLAPSDSTGGSHSVR), 374–415 (WSGV…MLSR), and 437–639 (YGQR…SLVV). Composition is skewed to basic and acidic residues over residues 393 to 414 (YNKEDRESFRHSQPRSKSEMLS) and 442 to 464 (RRADGNSHEARGGSRFERSESRA). Ser-473 carries the phosphoserine modification. Residues 483–493 (RSREPLTDADR) are compositionally biased toward basic and acidic residues. Arg-544 is modified (omega-N-methylarginine). At Ser-579 the chain carries Phosphoserine. The span at 606–617 (RGRDLPYHSNSE) shows a compositional bias: basic and acidic residues.

This sequence belongs to the immunoglobulin superfamily. LISCH7 family. Interacts with MARVELD2 and OCLN. Interacts with P4HB AND HSPA5; the interaction with HSPA5 stabilizes ILDR2 expression. Interacts (via C-terminus) with TRA2A, TRA2B and SRSF1. Expressed in testis, brain, pituitary, colon, heart, nerves, prostate, esophagus, lung liver and small intestine. Highly expressed in macrophages, also expressed in monocytes and at low levels in NK and NKT cells (at protein level).

The protein resides in the endoplasmic reticulum membrane. It localises to the cell junction. It is found in the tight junction. The protein localises to the nucleus. Functionally, may be involved in ER stress pathways with effects on lipid homeostasis and insulin secretion. With ILDR1 and LSR, involved in the maintain of the epithelial barrier function through the recruitment of MARVELD2/tricellulin to tricellular tight junctions. Also functions as a B7-like protein family member expressed on immune cells and inflamed tissue and with T-cell inhibitory activity. In the inner ear, may regulate alternative pre-mRNA splicing via binding to TRA2A, TRA2B and SRSF1. This Homo sapiens (Human) protein is Immunoglobulin-like domain-containing receptor 2.